We begin with the raw amino-acid sequence, 467 residues long: NADH-ubiquinone oxidoreductase chain 4 (467 aa).

13 consecutive transmembrane segments (helical) span residues 21-40, 54-74, 79-99, 105-125, 135-155, 168-188, 207-227, 239-259, 266-286, 297-317, 330-350, 367-387, and 420-440; these read SMSKHMFTVASMLMAMPTLY, MADVLMLLTMYMLPLSMISNW, STLYFELVLNLGMMLLINFMC, FYMYFEASLAPLFMLMGLYGA, VLMYTLFSSLFMLLAMALYEV, LVLSLDLQCMLFLAMSMGIAV, PLAGSMLLAGMILKLAVFAMI, VTYTPFVYVMCVMTMMYTSII, LKVIIAYSSISHMAVCMLGML, LVLCIAHGFVSPGLFMMVGGM, FQGLISYMPYLSVYFMMLSFC, LTGAINRAPVLGAMAALSVLL, and VLMITLIVPTMFLGFFPSWVM.

It belongs to the complex I subunit 4 family.

It is found in the mitochondrion membrane. The enzyme catalyses a ubiquinone + NADH + 5 H(+)(in) = a ubiquinol + NAD(+) + 4 H(+)(out). Core subunit of the mitochondrial membrane respiratory chain NADH dehydrogenase (Complex I) that is believed to belong to the minimal assembly required for catalysis. Complex I functions in the transfer of electrons from NADH to the respiratory chain. The immediate electron acceptor for the enzyme is believed to be ubiquinone. This Debaryomyces hansenii (strain ATCC 36239 / CBS 767 / BCRC 21394 / JCM 1990 / NBRC 0083 / IGC 2968) (Yeast) protein is NADH-ubiquinone oxidoreductase chain 4 (ND4).